The sequence spans 414 residues: Mannan endo-1,4-beta-mannosidase 3 (414 aa).

Positions 1–19 are cleaved as a signal peptide; that stretch reads MKCLCFVVLLAILIAQNSS. N-linked (GlcNAc...) asparagine glycans are attached at residues Asn17 and Asn75. Trp87 is a substrate binding site. 2 N-linked (GlcNAc...) asparagine glycosylation sites follow: Asn133 and Asn153. Asn202 provides a ligand contact to substrate. Catalysis depends on Glu203, which acts as the Proton donor. Position 283 (Tyr283) interacts with substrate. Glu323 acts as the Nucleophile in catalysis. The N-linked (GlcNAc...) asparagine glycan is linked to Asn343. Trp365 contributes to the substrate binding site. N-linked (GlcNAc...) asparagine glycosylation is present at Asn386.

The protein belongs to the glycosyl hydrolase 5 (cellulase A) family. Expressed in leaves, flowers, siliques and seeds.

The protein resides in the secreted. It catalyses the reaction Random hydrolysis of (1-&gt;4)-beta-D-mannosidic linkages in mannans, galactomannans and glucomannans.. This is Mannan endo-1,4-beta-mannosidase 3 (MAN3) from Arabidopsis thaliana (Mouse-ear cress).